A 322-amino-acid chain; its full sequence is Tlg2p-like protein a (322 aa).

The Cytoplasmic segment spans residues 1–301 (MATRNRTLLF…QRHGGMVKCA (301 aa)). Positions 116–146 (KEDQHNIESLTQEITFLLKKSEKQLQRLSAS) form a coiled coil. A t-SNARE coiled-coil homology domain is found at 226–288 (EEVSVEREKE…EDGLKQLQKA (63 aa)). Residues 302 to 322 (SVLVILCFIMLLLLILKEIFL) form a helical; Anchor for type IV membrane protein membrane-spanning segment.

Belongs to the syntaxin family. Interacts with VTI12 and SYP61 to form a t-SNARE complex and with VPS45. Interacts with TNO1. Binds to YKT61 and YKT62. Core constituent of the SNARE complex required for membrane fusion at the trans-Golgi network. In terms of tissue distribution, mostly expressed in flowers, to a lower extent in leaves and roots, and, at low levels, in stems.

The protein localises to the golgi apparatus. The protein resides in the trans-Golgi network membrane. Its function is as follows. Contributes to the regulation of secretory and vacuolar transport pathways in the post-Golgi network, and to the maintenance of the Golgi apparatus and trans-Golgi network (TGN) morphologies. Together with VTI12, required for membrane fusion. Vesicle trafficking protein that functions in the secretory pathway and mediates liposome fusion; the fusion of phospholipid vesicles containing SYP41 and VTI12 is triggered by YKT61 and YKT62. Required for extracellular resistance responses to a fungal pathogen. Also involved in the protection of chloroplasts from salicylic acid-dependent biotic stress. The polypeptide is Tlg2p-like protein a (Arabidopsis thaliana (Mouse-ear cress)).